A 258-amino-acid polypeptide reads, in one-letter code: Triosephosphate isomerase (258 aa).

Residue 9-11 (NWK) participates in substrate binding. His95 serves as the catalytic Electrophile. Residue Glu167 is the Proton acceptor of the active site. Residues Gly173 and Ser212 each coordinate substrate.

It belongs to the triosephosphate isomerase family. As to quaternary structure, homodimer.

Its subcellular location is the cytoplasm. The catalysed reaction is D-glyceraldehyde 3-phosphate = dihydroxyacetone phosphate. It participates in carbohydrate biosynthesis; gluconeogenesis. It functions in the pathway carbohydrate degradation; glycolysis; D-glyceraldehyde 3-phosphate from glycerone phosphate: step 1/1. Involved in the gluconeogenesis. Catalyzes stereospecifically the conversion of dihydroxyacetone phosphate (DHAP) to D-glyceraldehyde-3-phosphate (G3P). This chain is Triosephosphate isomerase, found in Blochmanniella pennsylvanica (strain BPEN).